Consider the following 91-residue polypeptide: Small ribosomal subunit protein bS18 (91 aa).

Positions 1–21 (MSDERAPQRSTGPRKKRPFQR) are disordered. The span at 12–21 (GPRKKRPFQR) shows a compositional bias: basic residues.

Belongs to the bacterial ribosomal protein bS18 family. As to quaternary structure, part of the 30S ribosomal subunit. Forms a tight heterodimer with protein bS6.

Functionally, binds as a heterodimer with protein bS6 to the central domain of the 16S rRNA, where it helps stabilize the platform of the 30S subunit. In Geotalea daltonii (strain DSM 22248 / JCM 15807 / FRC-32) (Geobacter daltonii), this protein is Small ribosomal subunit protein bS18.